We begin with the raw amino-acid sequence, 353 residues long: Beta-agarase B (353 aa).

The N-terminal stretch at 1-17 (MYLIYLRLVFCCALLLG) is a signal peptide. A lipid anchor (N-palmitoyl cysteine) is attached at C18. A lipid anchor (S-diacylglycerol cysteine) is attached at C18. The segment at 30-58 (LPVEQEQEQETEQEGEPEESSEQDLVEEV) is disordered. Residues 32 to 58 (VEQEQEQETEQEGEPEESSEQDLVEEV) are compositionally biased toward acidic residues. Residues 58–353 (VDWKDIPVPA…WIRIYKPVEK (296 aa)) enclose the GH16 domain. Substrate is bound by residues 105 to 107 (YHN) and D181. The active-site Nucleophile is E184. E189 (proton donor) is an active-site residue. H215, R219, D224, Q226, and E308 together coordinate substrate.

The protein belongs to the glycosyl hydrolase 16 family. In terms of assembly, homodimer.

Its subcellular location is the cell outer membrane. It carries out the reaction Hydrolysis of (1-&gt;4)-beta-D-galactosidic linkages in agarose, giving the tetramer as the predominant product.. Its function is as follows. Cleaves the beta-1,4-linkages between beta-D-galactose and alpha-L-3,6-anhydro-galactose residues in agarose. Cleaves agarose in a random manner with retention of the anomeric-bond configuration, producing beta-anomers that give rise progressively to alpha-anomers when mutarotation takes place. Also tolerant to hybrid substrates containing C6-sulfate groups at the -4, +1, and +3 positions. The polypeptide is Beta-agarase B (agaB) (Zobellia galactanivorans (strain DSM 12802 / CCUG 47099 / CIP 106680 / NCIMB 13871 / Dsij)).